The primary structure comprises 239 residues: 1-(5-phosphoribosyl)-5-[(5-phosphoribosylamino)methylideneamino] imidazole-4-carboxamide isomerase (239 aa).

Aspartate 8 (proton acceptor) is an active-site residue. The Proton donor role is filled by aspartate 129.

The protein belongs to the HisA/HisF family.

The protein localises to the cytoplasm. It catalyses the reaction 1-(5-phospho-beta-D-ribosyl)-5-[(5-phospho-beta-D-ribosylamino)methylideneamino]imidazole-4-carboxamide = 5-[(5-phospho-1-deoxy-D-ribulos-1-ylimino)methylamino]-1-(5-phospho-beta-D-ribosyl)imidazole-4-carboxamide. Its pathway is amino-acid biosynthesis; L-histidine biosynthesis; L-histidine from 5-phospho-alpha-D-ribose 1-diphosphate: step 4/9. The chain is 1-(5-phosphoribosyl)-5-[(5-phosphoribosylamino)methylideneamino] imidazole-4-carboxamide isomerase from Bacillus anthracis (strain A0248).